The chain runs to 139 residues: D-ribose pyranase (139 aa).

Catalysis depends on H20, which acts as the Proton donor. Substrate contacts are provided by residues D28, H106, and 128 to 130 (YAN).

Belongs to the RbsD / FucU family. RbsD subfamily. In terms of assembly, homodecamer.

It localises to the cytoplasm. The enzyme catalyses beta-D-ribopyranose = beta-D-ribofuranose. It functions in the pathway carbohydrate metabolism; D-ribose degradation; D-ribose 5-phosphate from beta-D-ribopyranose: step 1/2. Catalyzes the interconversion of beta-pyran and beta-furan forms of D-ribose. The polypeptide is D-ribose pyranase (Proteus mirabilis (strain HI4320)).